The chain runs to 296 residues: Light-independent protochlorophyllide reductase iron-sulfur ATP-binding protein (296 aa).

ATP is bound by residues 39 to 44 and K68; that span reads GIGKST. S43 serves as a coordination point for Mg(2+). Positions 124 and 158 each coordinate [4Fe-4S] cluster. Residue 209–210 participates in ATP binding; sequence NR.

This sequence belongs to the NifH/BchL/ChlL family. Homodimer. Protochlorophyllide reductase is composed of three subunits; ChlL, ChlN and ChlB. It depends on [4Fe-4S] cluster as a cofactor.

It catalyses the reaction chlorophyllide a + oxidized 2[4Fe-4S]-[ferredoxin] + 2 ADP + 2 phosphate = protochlorophyllide a + reduced 2[4Fe-4S]-[ferredoxin] + 2 ATP + 2 H2O. It participates in porphyrin-containing compound metabolism; chlorophyll biosynthesis (light-independent). Its function is as follows. Component of the dark-operative protochlorophyllide reductase (DPOR) that uses Mg-ATP and reduced ferredoxin to reduce ring D of protochlorophyllide (Pchlide) to form chlorophyllide a (Chlide). This reaction is light-independent. The L component serves as a unique electron donor to the NB-component of the complex, and binds Mg-ATP. This Prochlorococcus marinus (strain SARG / CCMP1375 / SS120) protein is Light-independent protochlorophyllide reductase iron-sulfur ATP-binding protein.